Here is a 128-residue protein sequence, read N- to C-terminus: Fluoride-specific ion channel FluC (128 aa).

4 helical membrane passes run I5 to G25, L35 to F55, L67 to V87, and F96 to L116. Na(+) contacts are provided by G75 and T78.

The protein belongs to the fluoride channel Fluc/FEX (TC 1.A.43) family.

The protein resides in the cell inner membrane. The enzyme catalyses fluoride(in) = fluoride(out). With respect to regulation, na(+) is not transported, but it plays an essential structural role and its presence is essential for fluoride channel function. Functionally, fluoride-specific ion channel. Important for reducing fluoride concentration in the cell, thus reducing its toxicity. This chain is Fluoride-specific ion channel FluC, found in Burkholderia pseudomallei (strain 1106a).